A 169-amino-acid chain; its full sequence is Lipoprotein signal peptidase (169 aa).

4 consecutive transmembrane segments (helical) span residues 10–30, 41–61, 68–88, and 94–114; these read LPWL…KAFF, VVIP…AFSF, WQRW…VVWL, and GETW…GNLY. Active-site residues include Asp-124 and Asp-143. A helical membrane pass occupies residues 135-155; that stretch reads YFPAFNLADSAITVGAVMLAL.

The protein belongs to the peptidase A8 family.

Its subcellular location is the cell inner membrane. The enzyme catalyses Release of signal peptides from bacterial membrane prolipoproteins. Hydrolyzes -Xaa-Yaa-Zaa-|-(S,diacylglyceryl)Cys-, in which Xaa is hydrophobic (preferably Leu), and Yaa (Ala or Ser) and Zaa (Gly or Ala) have small, neutral side chains.. The protein operates within protein modification; lipoprotein biosynthesis (signal peptide cleavage). This protein specifically catalyzes the removal of signal peptides from prolipoproteins. The sequence is that of Lipoprotein signal peptidase from Pseudomonas paraeruginosa (strain DSM 24068 / PA7) (Pseudomonas aeruginosa (strain PA7)).